Reading from the N-terminus, the 213-residue chain is Thymidine kinase (213 aa).

ATP contacts are provided by residues 20-27 and 93-96; these read GPMFSGKT and DEAQ. The Proton acceptor role is filled by Glu-94. Residues Cys-150, Cys-153, Cys-185, and His-188 each coordinate Zn(2+).

It belongs to the thymidine kinase family. In terms of assembly, homotetramer.

Its subcellular location is the cytoplasm. The enzyme catalyses thymidine + ATP = dTMP + ADP + H(+). The polypeptide is Thymidine kinase (Mycoplasma genitalium (strain ATCC 33530 / DSM 19775 / NCTC 10195 / G37) (Mycoplasmoides genitalium)).